A 95-amino-acid chain; its full sequence is Co-chaperonin GroES (95 aa).

It belongs to the GroES chaperonin family. Heptamer of 7 subunits arranged in a ring. Interacts with the chaperonin GroEL.

Its subcellular location is the cytoplasm. Together with the chaperonin GroEL, plays an essential role in assisting protein folding. The GroEL-GroES system forms a nano-cage that allows encapsulation of the non-native substrate proteins and provides a physical environment optimized to promote and accelerate protein folding. GroES binds to the apical surface of the GroEL ring, thereby capping the opening of the GroEL channel. The sequence is that of Co-chaperonin GroES from Geobacter sulfurreducens (strain ATCC 51573 / DSM 12127 / PCA).